Reading from the N-terminus, the 706-residue chain is Envelope glycoprotein H (706 aa).

A signal peptide spans 1–18; sequence MQLLCVFCLVLLWEVGAA. Residues 19-682 are Virion surface-facing; it reads SLSEVKLHLD…LYEERAHVVL (664 aa). N-linked (GlcNAc...) asparagine; by host glycosylation is present at Asn60. The interaction with gL stretch occupies residues 165–229; that stretch reads DKFQYTGAMT…QSGDYSLVIV (65 aa). Cysteines 278 and 335 form a disulfide. Asn435 carries N-linked (GlcNAc...) asparagine; by host glycosylation. Intrachain disulfides connect Cys454-Cys478 and Cys534-Cys587. Residues Asn549 and Asn604 are each glycosylated (N-linked (GlcNAc...) asparagine; by host). Cys612 and Cys615 form a disulfide bridge. The N-linked (GlcNAc...) asparagine; by host glycan is linked to Asn664. A helical transmembrane segment spans residues 683-703; the sequence is AIILYFIAFALGIFLVHKIVM. Residues 704-706 are Intravirion-facing; the sequence is FFL.

It belongs to the herpesviridae glycoprotein H family. In terms of assembly, interacts with glycoprotein L (gL); this interaction is necessary for the correct processing and cell surface expression of gH. The heterodimer gH/gL seems to interact with gB trimers during fusion. The heterodimer gH/gL interacts with host EPHA2 to facilitate virus internalization and fusion. Interacts with glycoprotein 42/BZLF2. N-glycosylated, O-glycosylated, and sialylated.

Its subcellular location is the virion membrane. The protein resides in the host cell membrane. It localises to the host endosome membrane. Its function is as follows. The heterodimer glycoprotein H-glycoprotein L is required for the fusion of viral and plasma membranes leading to virus entry into the host cell. Following initial binding to host receptor, membrane fusion is mediated by the fusion machinery composed of gB and the heterodimer gH/gL. May also be involved in the fusion between the virion envelope and the outer nuclear membrane during virion morphogenesis. The heterodimer gH/gL targets also host EPHA2 to promote viral entry. In Homo sapiens (Human), this protein is Envelope glycoprotein H.